Here is a 453-residue protein sequence, read N- to C-terminus: Bifunctional protein GlmU (453 aa).

The segment at Met1 to Arg226 is pyrophosphorylase. UDP-N-acetyl-alpha-D-glucosamine is bound by residues Leu7–Gly10, Lys21, Gln73, and Gly78–Thr79. Mg(2+) is bound at residue Asp103. UDP-N-acetyl-alpha-D-glucosamine contacts are provided by Gly140, Glu155, Asn170, and Asn224. Mg(2+) is bound at residue Asn224. The linker stretch occupies residues Ala227 to Lys247. The segment at Gly248–Gln453 is N-acetyltransferase. UDP-N-acetyl-alpha-D-glucosamine is bound by residues Arg329 and Lys347. His359 (proton acceptor) is an active-site residue. UDP-N-acetyl-alpha-D-glucosamine contacts are provided by Tyr362 and Asn373. Acetyl-CoA contacts are provided by Ala376, Ala419, and Arg436.

This sequence in the N-terminal section; belongs to the N-acetylglucosamine-1-phosphate uridyltransferase family. It in the C-terminal section; belongs to the transferase hexapeptide repeat family. In terms of assembly, homotrimer. Mg(2+) is required as a cofactor.

The protein resides in the cytoplasm. The enzyme catalyses alpha-D-glucosamine 1-phosphate + acetyl-CoA = N-acetyl-alpha-D-glucosamine 1-phosphate + CoA + H(+). The catalysed reaction is N-acetyl-alpha-D-glucosamine 1-phosphate + UTP + H(+) = UDP-N-acetyl-alpha-D-glucosamine + diphosphate. It participates in nucleotide-sugar biosynthesis; UDP-N-acetyl-alpha-D-glucosamine biosynthesis; N-acetyl-alpha-D-glucosamine 1-phosphate from alpha-D-glucosamine 6-phosphate (route II): step 2/2. It functions in the pathway nucleotide-sugar biosynthesis; UDP-N-acetyl-alpha-D-glucosamine biosynthesis; UDP-N-acetyl-alpha-D-glucosamine from N-acetyl-alpha-D-glucosamine 1-phosphate: step 1/1. Its pathway is bacterial outer membrane biogenesis; LPS lipid A biosynthesis. Catalyzes the last two sequential reactions in the de novo biosynthetic pathway for UDP-N-acetylglucosamine (UDP-GlcNAc). The C-terminal domain catalyzes the transfer of acetyl group from acetyl coenzyme A to glucosamine-1-phosphate (GlcN-1-P) to produce N-acetylglucosamine-1-phosphate (GlcNAc-1-P), which is converted into UDP-GlcNAc by the transfer of uridine 5-monophosphate (from uridine 5-triphosphate), a reaction catalyzed by the N-terminal domain. This Prochlorococcus marinus (strain MIT 9211) protein is Bifunctional protein GlmU.